A 169-amino-acid chain; its full sequence is SsrA-binding protein (169 aa).

It belongs to the SmpB family.

It is found in the cytoplasm. Functionally, required for rescue of stalled ribosomes mediated by trans-translation. Binds to transfer-messenger RNA (tmRNA), required for stable association of tmRNA with ribosomes. tmRNA and SmpB together mimic tRNA shape, replacing the anticodon stem-loop with SmpB. tmRNA is encoded by the ssrA gene; the 2 termini fold to resemble tRNA(Ala) and it encodes a 'tag peptide', a short internal open reading frame. During trans-translation Ala-aminoacylated tmRNA acts like a tRNA, entering the A-site of stalled ribosomes, displacing the stalled mRNA. The ribosome then switches to translate the ORF on the tmRNA; the nascent peptide is terminated with the 'tag peptide' encoded by the tmRNA and targeted for degradation. The ribosome is freed to recommence translation, which seems to be the essential function of trans-translation. This is SsrA-binding protein from Mycolicibacterium paratuberculosis (strain ATCC BAA-968 / K-10) (Mycobacterium paratuberculosis).